A 301-amino-acid polypeptide reads, in one-letter code: Aspartate carbamoyltransferase catalytic subunit (301 aa).

Carbamoyl phosphate contacts are provided by Arg46 and Thr47. Lys74 lines the L-aspartate pocket. Carbamoyl phosphate is bound by residues Arg96, His124, and Gln127. 2 residues coordinate L-aspartate: Arg157 and Arg208. Carbamoyl phosphate is bound by residues Ala249 and Pro250.

This sequence belongs to the aspartate/ornithine carbamoyltransferase superfamily. ATCase family. In terms of assembly, heterododecamer (2C3:3R2) of six catalytic PyrB chains organized as two trimers (C3), and six regulatory PyrI chains organized as three dimers (R2).

It catalyses the reaction carbamoyl phosphate + L-aspartate = N-carbamoyl-L-aspartate + phosphate + H(+). It functions in the pathway pyrimidine metabolism; UMP biosynthesis via de novo pathway; (S)-dihydroorotate from bicarbonate: step 2/3. Functionally, catalyzes the condensation of carbamoyl phosphate and aspartate to form carbamoyl aspartate and inorganic phosphate, the committed step in the de novo pyrimidine nucleotide biosynthesis pathway. The polypeptide is Aspartate carbamoyltransferase catalytic subunit (Bacillus cereus (strain ATCC 14579 / DSM 31 / CCUG 7414 / JCM 2152 / NBRC 15305 / NCIMB 9373 / NCTC 2599 / NRRL B-3711)).